The sequence spans 962 residues: Putative primase C962R (962 aa).

One can recognise an SF3 helicase domain in the interval 607 to 775 (ELDARLWIMF…PDPNNSYEKK (169 aa)). ATP is bound at residue 636 to 643 (GGGCNGKT).

The protein belongs to the asfivirus helicase C962R family.

This African swine fever virus (isolate Warthog/Namibia/Wart80/1980) (ASFV) protein is Putative primase C962R.